The sequence spans 373 residues: Cytoplasmic tRNA 2-thiolation protein 1 (373 aa).

It belongs to the TtcA family. CTU1/NCS6/ATPBD3 subfamily.

The protein resides in the cytoplasm. Its pathway is tRNA modification; 5-methoxycarbonylmethyl-2-thiouridine-tRNA biosynthesis. In terms of biological role, plays a central role in 2-thiolation of mcm(5)S(2)U at tRNA wobble positions of tRNA(Lys), tRNA(Glu) and tRNA(Gln). Directly binds tRNAs and probably acts by catalyzing adenylation of tRNAs, an intermediate required for 2-thiolation. It is unclear whether it acts as a sulfurtransferase that transfers sulfur from thiocarboxylated URM1 onto the uridine of tRNAs at wobble position. Prior mcm(5) tRNA modification by the elongator complex is required for 2-thiolation. May also be involved in protein urmylation. The polypeptide is Cytoplasmic tRNA 2-thiolation protein 1 (Malassezia globosa (strain ATCC MYA-4612 / CBS 7966) (Dandruff-associated fungus)).